The chain runs to 110 residues: UPF0060 membrane protein BTH_I2792 (110 aa).

Helical transmembrane passes span 9 to 29, 34 to 54, 64 to 84, and 86 to 106; these read ALFVLTAVAEIVGCYLPWLVL, PVWLLAPAALSLALFAWLLTL, AAYGGVYIAVALAWLRIVDGV, and LSRWDAAGAALALAGMSVIAL.

This sequence belongs to the UPF0060 family.

It is found in the cell inner membrane. The sequence is that of UPF0060 membrane protein BTH_I2792 from Burkholderia thailandensis (strain ATCC 700388 / DSM 13276 / CCUG 48851 / CIP 106301 / E264).